A 99-amino-acid chain; its full sequence is uncharacterized protein (99 aa).

Residues 74–90 (FLSLPLGHSYLFLFCFW) traverse the membrane as a helical segment.

The protein resides in the membrane. This is an uncharacterized protein from Saccharomyces cerevisiae (strain ATCC 204508 / S288c) (Baker's yeast).